The sequence spans 162 residues: Calcium-binding protein 4b (162 aa).

4 EF-hand domains span residues 10–45 (ELTN…CKYP), 46–81 (NPTL…DYII), 85–120 (TCLK…SGSN), and 123–158 (QAKV…YFEI). The Ca(2+) site is built by D23, N25, D27, Q29, E34, D59, D61, D63, K65, and E70. Residues D136, D138, D140, C142, and E147 each coordinate Ca(2+).

This Dictyostelium discoideum (Social amoeba) protein is Calcium-binding protein 4b (cbpD2).